The sequence spans 472 residues: Putative ankyrin repeat protein L675 (472 aa).

8 ANK repeats span residues 125–156 (YKANRFYLGEKFDLGDVEVVKFFIKKGTDIHL), 187–216 (DNFKVLAKICRDGNLELLRLLELNGFNETI), 265–295 (YKTKVLLMAIANNHAELVQYLLTQNPSDKDI), 297–323 (HAMLYAVTTANASLLDYTLKNGGNIHY), 325–351 (NDQALILAVRFNHISMVRKLICLGMDS), 352–381 (NNVFALTMAAENNHQDIVQHLINRGADVNA), 382–411 (NNRSALIAAVKNGHLKIVQMFVNNGADIKI), and 413–440 (DTVIKTACKNGHNNIVKYLLGKGVSCDD).

The sequence is that of Putative ankyrin repeat protein L675 from Acanthamoeba polyphaga (Amoeba).